The primary structure comprises 364 residues: 3-methyl-2-oxobutanoate hydroxymethyltransferase 1, mitochondrial (364 aa).

The N-terminal 59 residues, 1–59, are a transit peptide targeting the mitochondrion; sequence MMMMMRRAFRHLARQQRRPLSHVPESAVYGGPRPQDVGAAAGAGAGAGATRRVTVTTLR. The Mg(2+) site is built by Asp-94 and Asp-133. Residues 94 to 95, Asp-133, and Lys-163 each bind 3-methyl-2-oxobutanoate; that span reads DS. Glu-165 provides a ligand contact to Mg(2+). Glu-233 (proton acceptor) is an active-site residue.

Belongs to the PanB family. Mg(2+) is required as a cofactor.

The protein localises to the mitochondrion. The enzyme catalyses 3-methyl-2-oxobutanoate + (6R)-5,10-methylene-5,6,7,8-tetrahydrofolate + H2O = 2-dehydropantoate + (6S)-5,6,7,8-tetrahydrofolate. Its pathway is cofactor biosynthesis; (R)-pantothenate biosynthesis; (R)-pantoate from 3-methyl-2-oxobutanoate: step 1/2. Its function is as follows. Catalyzes the reversible reaction in which hydroxymethyl group from 5,10-methylenetetrahydrofolate is transferred onto alpha-ketoisovalerate to form ketopantoate. In Oryza sativa subsp. japonica (Rice), this protein is 3-methyl-2-oxobutanoate hydroxymethyltransferase 1, mitochondrial (KPHMT1).